The chain runs to 200 residues: MGITRDSRHKRSATGAKRAQYRKKRKFELGRQPSNTRIGPKRIHEVRVRGGNKKFRALRLDSGNFSWGSEGVSKKTRIIQVAYHPSNNELVRTNTLTKSAIVQIDAAPFRVWYETHYGILMGSKGKKATATPTPKSKHVQRKHSARLGDSKVDSALETQFAAGRLYAVVSSRPGQSGRCDGYILEGEELHFYLRRMAPKK.

The segment at 1-41 (MGITRDSRHKRSATGAKRAQYRKKRKFELGRQPSNTRIGPK) is disordered. Phosphoserine is present on residues Ser-62 and Ser-99. Positions 124 to 145 (KGKKATATPTPKSKHVQRKHSA) are disordered. Residues 135 to 145 (KSKHVQRKHSA) are compositionally biased toward basic residues. A phosphoserine mark is found at Ser-150, Ser-154, and Ser-171.

It belongs to the eukaryotic ribosomal protein eS8 family. Component of the small ribosomal subunit (SSU). Mature yeast ribosomes consist of a small (40S) and a large (60S) subunit. The 40S small subunit contains 1 molecule of ribosomal RNA (18S rRNA) and at least 33 different proteins. The large 60S subunit contains 3 rRNA molecules (25S, 5.8S and 5S rRNA) and at least 46 different proteins.

Its subcellular location is the cytoplasm. Component of the ribosome, a large ribonucleoprotein complex responsible for the synthesis of proteins in the cell. The small ribosomal subunit (SSU) binds messenger RNAs (mRNAs) and translates the encoded message by selecting cognate aminoacyl-transfer RNA (tRNA) molecules. The large subunit (LSU) contains the ribosomal catalytic site termed the peptidyl transferase center (PTC), which catalyzes the formation of peptide bonds, thereby polymerizing the amino acids delivered by tRNAs into a polypeptide chain. The nascent polypeptides leave the ribosome through a tunnel in the LSU and interact with protein factors that function in enzymatic processing, targeting, and the membrane insertion of nascent chains at the exit of the ribosomal tunnel. The sequence is that of Small ribosomal subunit protein eS8B (rps802) from Schizosaccharomyces pombe (strain 972 / ATCC 24843) (Fission yeast).